Consider the following 694-residue polypeptide: Transcription activator of gluconeogenesis PTRG_06536 (694 aa).

The segment at 1 to 57 is disordered; that stretch reads MTTPDAEDASPSPEYRSDQDDDMAAEQTTDRQSGDASPTQKPANGKPNAKDPLRPRR. The segment at residues 64–92 is a DNA-binding region (zn(2)-C6 fungal-type); the sequence is CFACQRAHLTCGDERPCGRCIKRGLQDHC. Disordered stretches follow at residues 175-216, 289-369, 384-420, and 539-569; these read FSNQ…FGPL, AMAF…GDNP, AQRSPLVSRPQQENRPPTTALQSIHANGIRKRQRDTK, and VNLGTNRESSESDTSTQNTTPNLSAQDSEGA. Polar residues predominate over residues 193-204; the sequence is SVQNAGAPSTMS. Positions 205 to 214 are enriched in low complexity; that stretch reads QGQQGMQQFG. Polar residues predominate over residues 302–324; that stretch reads WQETQSRQGSMHVHTPNNTSGSG. Low complexity predominate over residues 349–363; that stretch reads ATHSTASPASTDAST. Residues 392–408 are compositionally biased toward polar residues; the sequence is RPQQENRPPTTALQSIH. The region spanning 485–559 is the PAS domain; it reads LQRHLMTLQE…SDTSTQNTTP (75 aa).

Belongs to the ERT1/acuK family.

It localises to the nucleus. Transcription factor which regulates nonfermentable carbon utilization. Activator of gluconeogenetic genes. The sequence is that of Transcription activator of gluconeogenesis PTRG_06536 from Pyrenophora tritici-repentis (strain Pt-1C-BFP) (Wheat tan spot fungus).